The following is a 254-amino-acid chain: 3-deoxy-manno-octulosonate cytidylyltransferase (254 aa).

Belongs to the KdsB family.

Its subcellular location is the cytoplasm. The catalysed reaction is 3-deoxy-alpha-D-manno-oct-2-ulosonate + CTP = CMP-3-deoxy-beta-D-manno-octulosonate + diphosphate. Its pathway is nucleotide-sugar biosynthesis; CMP-3-deoxy-D-manno-octulosonate biosynthesis; CMP-3-deoxy-D-manno-octulosonate from 3-deoxy-D-manno-octulosonate and CTP: step 1/1. The protein operates within bacterial outer membrane biogenesis; lipopolysaccharide biosynthesis. Its function is as follows. Activates KDO (a required 8-carbon sugar) for incorporation into bacterial lipopolysaccharide in Gram-negative bacteria. This is 3-deoxy-manno-octulosonate cytidylyltransferase from Chlamydia abortus (strain DSM 27085 / S26/3) (Chlamydophila abortus).